The primary structure comprises 306 residues: Pantothenate kinase (306 aa).

90–97 lines the ATP pocket; it reads GSVAVGKS.

This sequence belongs to the prokaryotic pantothenate kinase family.

The protein localises to the cytoplasm. The enzyme catalyses (R)-pantothenate + ATP = (R)-4'-phosphopantothenate + ADP + H(+). It participates in cofactor biosynthesis; coenzyme A biosynthesis; CoA from (R)-pantothenate: step 1/5. The chain is Pantothenate kinase from Listeria monocytogenes serotype 4b (strain CLIP80459).